Reading from the N-terminus, the 492-residue chain is 2-succinylbenzoate--CoA ligase (492 aa).

It belongs to the ATP-dependent AMP-binding enzyme family. MenE subfamily.

It catalyses the reaction 2-succinylbenzoate + ATP + CoA = 2-succinylbenzoyl-CoA + AMP + diphosphate. Its pathway is quinol/quinone metabolism; 1,4-dihydroxy-2-naphthoate biosynthesis; 1,4-dihydroxy-2-naphthoate from chorismate: step 5/7. It functions in the pathway quinol/quinone metabolism; menaquinone biosynthesis. In terms of biological role, converts 2-succinylbenzoate (OSB) to 2-succinylbenzoyl-CoA (OSB-CoA). This chain is 2-succinylbenzoate--CoA ligase, found in Staphylococcus aureus (strain bovine RF122 / ET3-1).